The primary structure comprises 192 residues: Large ribosomal subunit protein bL25 (192 aa).

Belongs to the bacterial ribosomal protein bL25 family. CTC subfamily. As to quaternary structure, part of the 50S ribosomal subunit; part of the 5S rRNA/L5/L18/L25 subcomplex. Contacts the 5S rRNA. Binds to the 5S rRNA independently of L5 and L18.

This is one of the proteins that binds to the 5S RNA in the ribosome where it forms part of the central protuberance. The polypeptide is Large ribosomal subunit protein bL25 (Marinomonas sp. (strain MWYL1)).